Reading from the N-terminus, the 233-residue chain is MEPTAPSLTEEDLTEVKKDALENLRVYLCEKIIAERHFDHLRAKKILSREDTEEISCRTSSRKRAGKLLDYLQENPKGLDTLVESIRREKTQNFLIQKITDEVLKLRNIKLEHLKGLKCSSCEPFPDGATNNLSRSNSDESNFSEKLRASTVMYHPEGESSTTPFFSTNSSLNLPVLEVGRTENTIFSSTTLPRPGDPGAPPLPPDLQLEEEGTCANSSEMFLPLRSRTVSRQ.

Met-1 is subject to N-acetylmethionine. Positions 13-101 (LTEVKKDALE…QNFLIQKITD (89 aa)) constitute a CARD domain. Glycyl lysine isopeptide (Lys-Gly) (interchain with G-Cter in ubiquitin) cross-links involve residues Lys-17, Lys-31, and Lys-63. Ser-138 bears the Phosphoserine mark. The segment at 187-233 (FSSTTLPRPGDPGAPPLPPDLQLEEEGTCANSSEMFLPLRSRTVSRQ) is disordered. A compositionally biased stretch (pro residues) spans 195 to 205 (PGDPGAPPLPP).

Homomultimer; homooligomerized following recruitment by CARD domain-containing proteins that form a nucleating helical template that recruits BCL10 via CARD-CARD interaction. Self-associates by CARD-CARD interaction and interacts with other CARD-proteins such as CARD9, CARD10, CARD11 and CARD14. Forms a complex with CARD14 and MALT1; resulting in the formation of a CBM (CARD14-BCL10-MALT1) complex. Forms a complex with CARD11 and MALT1; resulting in the formation of a CBM (CARD11-BCL10-MALT1) complex. Forms a complex with CARD9 and MALT1; resulting in the formation of a CBM (CARD9-BCL10-MALT1) complex. Found in a membrane raft complex, at least composed of BCL10, CARD11, DPP4 and IKBKB. Binds caspase-9 with its C-terminal domain. Interacts with TRAF2 and BIRC2/c-IAP2. Interacts with PELI2 and SOCS3; these interactions may be mutually exclusive. Phosphorylated. Phosphorylation results in dissociation from TRAF2 and binding to BIRC2/c-IAP2. Phosphorylated by IKBKB/IKKB. Post-translationally, ubiquitinated via both 'Lys-63'-linked and linear ('Met-1'-linked) polyubiquitin chains in response to T-cell receptor (TCR) activation. Ubiquitination is recognized by IKBKG/NEMO, the regulatory subunit of I-kappa-B kinase (IKK), and is required for TCR-induced NF-kappa-B activation. Linear ubiquitination at Lys-17, Lys-31 and Lys-63 is mediated by RNF31/HOIP; linear ubiquitination is recognized with much higher affinity than 'Lys-63'-linked ubiquitin by IKBKG/NEMO. CARD11 is required for linear ubiquitination by HOIP by promoting the targeting of BCL10 to RNF31/HOIP. In terms of processing, proteolytically cleaved by MALT1; required for T-cell activation. In terms of tissue distribution, ubiquitous.

Its subcellular location is the cytoplasm. It localises to the perinuclear region. It is found in the membrane raft. Plays a key role in both adaptive and innate immune signaling by bridging CARD domain-containing proteins to immune activation. Acts by channeling adaptive and innate immune signaling downstream of CARD domain-containing proteins CARD9, CARD11 and CARD14 to activate NF-kappa-B and MAP kinase p38 (MAPK11, MAPK12, MAPK13 and/or MAPK14) pathways which stimulate expression of genes encoding pro-inflammatory cytokines and chemokines. Recruited by activated CARD domain-containing proteins: homooligomerized CARD domain-containing proteins form a nucleating helical template that recruits BCL10 via CARD-CARD interaction, thereby promoting polymerization of BCL10, subsequent recruitment of MALT1 and formation of a CBM complex. This leads to activation of NF-kappa-B and MAP kinase p38 (MAPK11, MAPK12, MAPK13 and/or MAPK14) pathways which stimulate expression of genes encoding pro-inflammatory cytokines and chemokines. Activated by CARD9 downstream of C-type lectin receptors; CARD9-mediated signals are essential for antifungal immunity. Activated by CARD11 downstream of T-cell receptor (TCR) and B-cell receptor (BCR). Promotes apoptosis, pro-caspase-9 maturation and activation of NF-kappa-B via NIK and IKK. The sequence is that of B-cell lymphoma/leukemia 10 from Homo sapiens (Human).